A 369-amino-acid polypeptide reads, in one-letter code: Ribonuclease D (369 aa).

The 165-residue stretch at 4 to 168 (EIITTTAQLH…CLEKLQQQLE (165 aa)) folds into the 3'-5' exonuclease domain. Residues 207 to 286 (DRQGLAIIKA…TQVISQDEST (80 aa)) enclose the HRDC domain.

This sequence belongs to the RNase D family. A divalent metal cation serves as cofactor.

It is found in the cytoplasm. The enzyme catalyses Exonucleolytic cleavage that removes extra residues from the 3'-terminus of tRNA to produce 5'-mononucleotides.. Its function is as follows. Exonuclease involved in the 3' processing of various precursor tRNAs. Initiates hydrolysis at the 3'-terminus of an RNA molecule and releases 5'-mononucleotides. This Psychromonas ingrahamii (strain DSM 17664 / CCUG 51855 / 37) protein is Ribonuclease D.